The primary structure comprises 154 residues: Large-conductance mechanosensitive channel (154 aa).

Transmembrane regions (helical) follow at residues 12-32 and 71-91; these read GNIV…ALIT and IVLS…FLVV. Residues 129–154 form a disordered region; it reads NGAPSGRHVDTADLTPTPNHEPRADT.

This sequence belongs to the MscL family. As to quaternary structure, homopentamer.

It localises to the cell membrane. Functionally, channel that opens in response to stretch forces in the membrane lipid bilayer. May participate in the regulation of osmotic pressure changes within the cell. The polypeptide is Large-conductance mechanosensitive channel (Mycobacterium leprae (strain Br4923)).